The chain runs to 208 residues: High frequency lysogenization protein HflD homolog (208 aa).

Belongs to the HflD family.

The protein localises to the cytoplasm. It localises to the cell inner membrane. This Yersinia pestis bv. Antiqua (strain Nepal516) protein is High frequency lysogenization protein HflD homolog.